We begin with the raw amino-acid sequence, 506 residues long: MAGRDAASNQLIDYKNSQTVSPGAITTGNGAPIGIKDASQTVGPRGPILLQDVNFLDEMSHFDRERIPERVVHAKGAGAFGYFEVTHDITQYCAAKIFDKVKKRTPLAVRFSTVGGESGSADTARDPRGFAVKFYTEDGVWDLVGNNTPVFFIRDPILFPSFIHTQKRNPQTHLKDPDMFWDFLTLRPESAHQVCILFSDRGTPDGYCHMNGYGSHTFKLINAKGEPIYAKFHFKTDQGIKNLDVKTADQLASTDPDYSIRDLYNRIKTCKFPSWTMYIQVMTYEQAKKFKYNPFDVTKVWSQKEYPLIPVGKMVLDRNPKNYFAEVEQIAFSPAHLVPGVEPSPDKMLHGRLFSYSDTHRHRLGPNYLQIPVNCPYKVKIENFQRDGAMNVTDNQDGAPNYFPNSFNGPQECPRARALSSCCPVTGDVYRYSSGDTEDNFGQVTDFWVHVLDKCAKKRLVQNIAGHLSNASQFLQERAVKNFTQVHADFGRMLTEELNLAKSSKF.

Residues His73 and Asn146 contribute to the active site. Tyr356 serves as a coordination point for heme. A Microbody targeting signal motif is present at residues 504–506 (SKF).

Belongs to the catalase family. Homotetramer. The cofactor is heme.

It localises to the peroxisome matrix. The catalysed reaction is 2 H2O2 = O2 + 2 H2O. Functionally, catalyzes the degradation of hydrogen peroxide (H(2)O(2)) generated by peroxisomal oxidases to water and oxygen, thereby protecting cells from the toxic effects of hydrogen peroxide. The protein is Catalase (Cat) of Drosophila melanogaster (Fruit fly).